Consider the following 517-residue polypeptide: UDP-N-acetylmuramoyl-L-alanyl-D-glutamate--2,6-diaminopimelate ligase (517 aa).

UDP-N-acetyl-alpha-D-muramoyl-L-alanyl-D-glutamate is bound by residues L34 and S36. 122-128 provides a ligand contact to ATP; that stretch reads GTSGKTT. UDP-N-acetyl-alpha-D-muramoyl-L-alanyl-D-glutamate-binding positions include 164–165, S191, and R199; that span reads TT. K231 is modified (N6-carboxylysine). Residues R394, 418-421, G476, and E480 contribute to the meso-2,6-diaminopimelate site; that span reads DNPR. The Meso-diaminopimelate recognition motif motif lies at 418–421; that stretch reads DNPR.

This sequence belongs to the MurCDEF family. MurE subfamily. It depends on Mg(2+) as a cofactor. Post-translationally, carboxylation is probably crucial for Mg(2+) binding and, consequently, for the gamma-phosphate positioning of ATP.

It is found in the cytoplasm. The catalysed reaction is UDP-N-acetyl-alpha-D-muramoyl-L-alanyl-D-glutamate + meso-2,6-diaminopimelate + ATP = UDP-N-acetyl-alpha-D-muramoyl-L-alanyl-gamma-D-glutamyl-meso-2,6-diaminopimelate + ADP + phosphate + H(+). The protein operates within cell wall biogenesis; peptidoglycan biosynthesis. Functionally, catalyzes the addition of meso-diaminopimelic acid to the nucleotide precursor UDP-N-acetylmuramoyl-L-alanyl-D-glutamate (UMAG) in the biosynthesis of bacterial cell-wall peptidoglycan. The chain is UDP-N-acetylmuramoyl-L-alanyl-D-glutamate--2,6-diaminopimelate ligase from Corynebacterium glutamicum (strain ATCC 13032 / DSM 20300 / JCM 1318 / BCRC 11384 / CCUG 27702 / LMG 3730 / NBRC 12168 / NCIMB 10025 / NRRL B-2784 / 534).